Consider the following 396-residue polypeptide: 1-deoxy-D-xylulose 5-phosphate reductoisomerase (396 aa).

The NADPH site is built by threonine 10, glycine 11, serine 12, isoleucine 13, and asparagine 123. 1-deoxy-D-xylulose 5-phosphate is bound at residue lysine 124. Glutamate 125 lines the NADPH pocket. Aspartate 149 is a binding site for Mn(2+). The 1-deoxy-D-xylulose 5-phosphate site is built by serine 150, glutamate 151, serine 185, and histidine 208. Mn(2+) is bound at residue glutamate 151. Glycine 214 provides a ligand contact to NADPH. 4 residues coordinate 1-deoxy-D-xylulose 5-phosphate: serine 221, asparagine 226, lysine 227, and glutamate 230. Glutamate 230 serves as a coordination point for Mn(2+).

The protein belongs to the DXR family. Requires Mg(2+) as cofactor. Mn(2+) is required as a cofactor.

It carries out the reaction 2-C-methyl-D-erythritol 4-phosphate + NADP(+) = 1-deoxy-D-xylulose 5-phosphate + NADPH + H(+). The protein operates within isoprenoid biosynthesis; isopentenyl diphosphate biosynthesis via DXP pathway; isopentenyl diphosphate from 1-deoxy-D-xylulose 5-phosphate: step 1/6. Catalyzes the NADPH-dependent rearrangement and reduction of 1-deoxy-D-xylulose-5-phosphate (DXP) to 2-C-methyl-D-erythritol 4-phosphate (MEP). This is 1-deoxy-D-xylulose 5-phosphate reductoisomerase from Shewanella baltica (strain OS155 / ATCC BAA-1091).